The sequence spans 63 residues: Megourin-1 (63 aa).

As to quaternary structure, monomer. Post-translationally, contains four disulfide bonds.

It is found in the secreted. Functionally, has antimicrobial activity against Gram-positive bacteria and fungi. The protein is Megourin-1 of Megoura viciae (Vetch aphid).